The following is a 331-amino-acid chain: MKQILYKLFEHQYLGRDEARTILQNIAQGKYNDAQVASLITVFLMRNISVEELCGFRDALLEMRVPVDLSEFAPIDIVGTGGDGKNTFNISTAACFTVAGAGFPVVKHGNYGATSVSGASNVMEQHGVKFTDHTDRLRRSMEKCNIAYLHAPLFNPALKAVAPIRKALAVRTFFNMLGPLVNPVIPTYQLLGVYNLPLLRLYTYTYQESATRFAVVHSLDGYDEISLTDEFKVATCGNEKIYTPESLGFNRCRESELDGGNTPEDAARIFDAVMEGTATEAQKNVVIVNAAFAIRVICPEKPIEECIALARESLESGKARETLKKFVELNG.

Residues glycine 79, glycine 82–aspartate 83, threonine 87, asparagine 89–threonine 92, lysine 107–serine 115, and alanine 119 contribute to the 5-phospho-alpha-D-ribose 1-diphosphate site. Glycine 79 provides a ligand contact to anthranilate. Residue serine 91 coordinates Mg(2+). Anthranilate is bound at residue asparagine 110. Arginine 165 serves as a coordination point for anthranilate. 2 residues coordinate Mg(2+): aspartate 223 and glutamate 224.

The protein belongs to the anthranilate phosphoribosyltransferase family. As to quaternary structure, homodimer. The cofactor is Mg(2+).

The enzyme catalyses N-(5-phospho-beta-D-ribosyl)anthranilate + diphosphate = 5-phospho-alpha-D-ribose 1-diphosphate + anthranilate. Its pathway is amino-acid biosynthesis; L-tryptophan biosynthesis; L-tryptophan from chorismate: step 2/5. In terms of biological role, catalyzes the transfer of the phosphoribosyl group of 5-phosphorylribose-1-pyrophosphate (PRPP) to anthranilate to yield N-(5'-phosphoribosyl)-anthranilate (PRA). The polypeptide is Anthranilate phosphoribosyltransferase (Bacteroides fragilis (strain YCH46)).